Here is a 475-residue protein sequence, read N- to C-terminus: UDP-N-acetylmuramate--L-alanine ligase (475 aa).

ATP is bound at residue 114 to 120 (GTHGKTT).

It belongs to the MurCDEF family.

It localises to the cytoplasm. The enzyme catalyses UDP-N-acetyl-alpha-D-muramate + L-alanine + ATP = UDP-N-acetyl-alpha-D-muramoyl-L-alanine + ADP + phosphate + H(+). It functions in the pathway cell wall biogenesis; peptidoglycan biosynthesis. Its function is as follows. Cell wall formation. The sequence is that of UDP-N-acetylmuramate--L-alanine ligase from Bartonella bacilliformis (strain ATCC 35685 / KC583 / Herrer 020/F12,63).